The primary structure comprises 107 residues: U1-lycotoxin-Ls1b (107 aa).

The N-terminal stretch at 1–20 (MMKALVVVALLVTLISYSSS) is a signal peptide. A propeptide spanning residues 21–41 (EGIDDLEADELLSLMANEQTR) is cleaved from the precursor. 4 disulfide bridges follow: cysteine 44–cysteine 59, cysteine 51–cysteine 68, cysteine 58–cysteine 86, and cysteine 70–cysteine 84.

Belongs to the neurotoxin 19 (CSTX) family. 04 (U1-Lctx) subfamily. As to expression, expressed by the venom gland.

It is found in the secreted. The sequence is that of U1-lycotoxin-Ls1b from Lycosa singoriensis (Wolf spider).